The sequence spans 187 residues: Elongation factor P (187 aa).

It belongs to the elongation factor P family.

Its subcellular location is the cytoplasm. It functions in the pathway protein biosynthesis; polypeptide chain elongation. Its function is as follows. Involved in peptide bond synthesis. Stimulates efficient translation and peptide-bond synthesis on native or reconstituted 70S ribosomes in vitro. Probably functions indirectly by altering the affinity of the ribosome for aminoacyl-tRNA, thus increasing their reactivity as acceptors for peptidyl transferase. This chain is Elongation factor P, found in Clavibacter michiganensis subsp. michiganensis (strain NCPPB 382).